The following is a 173-amino-acid chain: NADH-ubiquinone oxidoreductase chain 6 (173 aa).

5 helical membrane passes run 1–21 (MVYF…AVAS), 25–45 (PYFA…LLVG), 53–73 (LVLF…TAAL), 82–102 (WGDW…FFVG), and 141–161 (GIML…ILEL).

Belongs to the complex I subunit 6 family.

The protein localises to the mitochondrion membrane. The enzyme catalyses a ubiquinone + NADH + 5 H(+)(in) = a ubiquinol + NAD(+) + 4 H(+)(out). In terms of biological role, core subunit of the mitochondrial membrane respiratory chain NADH dehydrogenase (Complex I) that is believed to belong to the minimal assembly required for catalysis. Complex I functions in the transfer of electrons from NADH to the respiratory chain. The immediate electron acceptor for the enzyme is believed to be ubiquinone. This chain is NADH-ubiquinone oxidoreductase chain 6 (MT-ND6), found in Squalus acanthias (Spiny dogfish).